The sequence spans 7152 residues: Replicase polyprotein 1ab (7152 aa).

A CoV Nsp1 globular domain is found at 54–174 (YDNHVKIDCR…HKWFQFCRLY (121 aa)). A BetaCoV Nsp1 C-terminal domain is found at 192-222 (FSVEDAYAEVHAEPKGKYSQKAYALLRQYRG). The CoV Nsp2 N-terminal domain maps to 226–488 (VLFVDQYGCD…LITHALYLDY (263 aa)). Zn(2+) contacts are provided by Cys-365, Cys-370, Cys-386, and Cys-389. The C4 stretch occupies residues 365 to 389 (CFNDNCDFYGWVSGNMMDGFSCPLC). The CoV Nsp2 middle domain occupies 493-681 (CGNLEQNHIL…VNKFYTFFKL (189 aa)). Residues 697-809 (LKTINGLVCI…LDQAWRFPCA (113 aa)) enclose the CoV Nsp2 C-terminal domain. Positions 811–923 (RKVNFNEKPV…MYCTFAIEDV (113 aa)) constitute a Ubiquitin-like 1 domain. 11 tandem repeats follow at residues 945 to 954 (NDDEDVVTGD), 955 to 964 (NDDEDVVTGD), 965 to 974 (NDDEDVVTGD), 975 to 984 (NDDEDVVTGD), 985 to 994 (NDDEDVVTGD), 995 to 1004 (NDDEDVVTGD), 1005 to 1014 (NDDEDVVTGD), 1015 to 1024 (NDDEDVVTGD), 1025 to 1034 (NDDEDVVTGD), 1035 to 1044 (NDDEDVVTGD), and 1045 to 1054 (NDDEDVVTGD). The tract at residues 945–1054 (NDDEDVVTGD…NDDEDVVTGD (110 aa)) is 11 X 10 AA tandem repeat of N-[DN]-D-E-D-V-V-T-G-D. Residues 947–1036 (DEDVVTGDND…DEDVVTGDND (90 aa)) form a disordered region. The region spanning 1093 to 1343 (VFNDVYNDAL…VCFVKGDIIN (251 aa)) is the Peptidase C16 1 domain. Cys-1131 functions as the For PL1-PRO activity in the catalytic mechanism. Zn(2+) is bound by residues Cys-1208, Cys-1211, Cys-1234, and Cys-1236. A C4-type 1 zinc finger spans residues 1208 to 1236 (CLKCGFSFDLNGLDAVFFYGDIVSHVCKC). Active-site for PL1-PRO activity residues include His-1282 and Asp-1293. A Macro domain is found at 1321 to 1492 (ELAQLYGLCI…IIQKCQITSV (172 aa)). The region spanning 1548–1619 (NDVRDYLLSK…TVNQVCVLLA (72 aa)) is the DPUP domain. A Ubiquitin-like 2 domain is found at 1619-1674 (AKKIDVLLTVDGVNFKSISLTVGEVFGKILGNVFCDGIDVTKLKCSDFYADKILYQ). The Peptidase C16 2 domain maps to 1688–1948 (SSFGFDQQQL…MVAYNPDLSQ (261 aa)). The For PL2-PRO activity role is filled by Cys-1727. Zn(2+)-binding residues include Cys-1805, Cys-1807, Cys-1839, and Cys-1841. Residues 1805–1841 (CDCGIKQESRVGVDAVMHFGTLAKTDLFNGYKIGCNC) form a C4-type 2 zinc finger. Residues His-1884 and Asp-1898 each act as for PL2-PRO activity in the active site. The 102-residue stretch at 1962-2063 (IKAQFKPFAK…TYFNKPSFKS (102 aa)) folds into the Nucleic acid-binding domain. Residues 2078–2227 (ESQGNVVTSV…NDKTIFYTTE (150 aa)) form the G2M domain. A run of 3 helical transmembrane segments spans residues 2196–2216 (AIEF…LLHF), 2257–2277 (FLVV…NVIF), and 2288–2308 (FPIF…LVTI). Residues 2196–2433 (AIEFYGFLKW…FVLLRFYIVV (238 aa)) form an HD1 region. Residues 2293 to 2354 (GRIVMWIKAT…AIDFVQYEVD (62 aa)) enclose the 3Ecto domain. Disulfide bonds link Cys-2309-Cys-2333 and Cys-2324-Cys-2330. Helical transmembrane passes span 2371-2391 (LVIG…LIGL) and 2413-2433 (FIVF…YIVV). The interval 2441 to 2531 (GFIRHIVYGC…ELKRPVNPTD (91 aa)) is Y1. The CoV Nsp3 Y domain maps to 2441–2808 (GFIRHIVYGC…LTTPFSLKGG (368 aa)). His-2445, Cys-2450, Cys-2455, Cys-2458, Cys-2491, His-2494, Cys-2498, and Cys-2501 together coordinate Zn(2+). The segment at 2445–2458 (HIVYGCNKAGCLFC) is ZF1. The tract at residues 2491-2501 (CVKHQWNCFNC) is ZF2. Residues 2532 to 2624 (ASHYVVTDIK…LVDKKLITTA (93 aa)) are Y2. The segment at 2532–2808 (ASHYVVTDIK…LTTPFSLKGG (277 aa)) is coV-Y. Positions 2625–2707 (CNGISVTQTM…KSMISAVAAG (83 aa)) are Y3. Residues 2708–2808 (LEFTDENYNN…LTTPFSLKGG (101 aa)) are Y4. 5 consecutive transmembrane segments (helical) span residues 2814-2834 (LLYI…ALLP), 3089-3109 (ASSI…YYLI), 3121-3141 (VVVI…VFQV), 3148-3168 (VYAC…SVIM), and 3173-3193 (IVMY…AMVI). The HD2 stretch occupies residues 2814–3193 (LLYILFFISL…FCVTYVAMVI (380 aa)). In terms of domain architecture, Nsp4C spans 3207–3304 (IGVNVCNDST…TASVSTSFLQ (98 aa)). A Peptidase C30 domain is found at 3305–3607 (SGIVKMVSPT…YQQLAGVKLQ (303 aa)). Residues His-3345 and Cys-3449 each act as for 3CL-PRO activity in the active site. 7 helical membrane-spanning segments follow: residues 3621 to 3641 (ILIS…WTIF), 3646 to 3666 (THMI…MLLV), 3671 to 3691 (FYLT…NYLV), 3714 to 3734 (FTYV…IFIT), 3742 to 3762 (IFSL…WYFG), 3770 to 3790 (LLFI…SLAI), and 3813 to 3833 (LILL…GFFS). The segment at 3621 to 3833 (ILISTFLFSC…ILSCYWGFFS (213 aa)) is HD3. The region spanning 3895–3983 (SKLTDVKCAN…DYVQDSTVLQ (89 aa)) is the RdRp Nsp7 cofactor domain. One can recognise a RdRp Nsp8 cofactor domain in the interval 3984–4180 (ALQSEFVNMA…YNEVANAVMQ (197 aa)). Residues 4181–4290 (NNELMPHKLK…GTLSSTIRLQ (110 aa)) form the Nsp9 ssRNA-binding domain. Residues 4291-4428 (AGVATEYAAN…CVGSGVAVQS (138 aa)) form the ExoN/MTase coactivator domain. Zn(2+) contacts are provided by Cys-4364, Cys-4367, His-4373, Cys-4380, Cys-4406, Cys-4409, Cys-4417, and Cys-4419. Zinc fingers lie at residues 4364–4380 (CIYC…DGLC) and 4406–4419 (CQVC…SCSC). A NiRAN domain is found at 4433 to 4688 (FLNRVRGTSV…DCELFVNDSY (256 aa)). 2 residues coordinate Mn(2+): Asn-4636 and Asp-4645. Residues 4689–4787 (RQFDLVQYDF…MNLDVDTHRY (99 aa)) form the Nsp12 Interface domain. The Zn(2+) site is built by His-4718, Cys-4724, Cys-4729, Cys-4733, and Cys-4910. One can recognise a Nsp12 RNA-dependent RNA polymerase domain in the interval 4788–5355 (RLSLKDLLLY…NMYLKSAVMQ (568 aa)). A rdRp Fingers N-ter region spans residues 4790–5004 (SLKDLLLYAA…HQKCLKSIAA (215 aa)). The rdRp Palm N-ter stretch occupies residues 5005–5043 (TRGVPVVIGTTKFYGGWDDMLRHLIKDVDNPVLMGWDYP). The region spanning 5035 to 5197 (PVLMGWDYPK…CYNSDYASKG (163 aa)) is the RdRp catalytic domain. Residues 5044–5102 (KCDRAMPNILRIVSSLVLARKHEFCCSHGDRFYRLANECAQVLSEIVMCGGCYYVKPGG) form a rdRp Fingers C-ter region. Residues His-5065, Cys-5068, and Cys-5069 each contribute to the Zn(2+) site. The interval 5103 to 5238 (TSSGDATTAF…TNGPHEFCSQ (136 aa)) is rdRp Palm C-ter. Catalysis depends on residues Ser-5182, Asp-5183, and Asp-5184. The tract at residues 5239–5355 (HTMLVKIDGD…NMYLKSAVMQ (117 aa)) is rdRp Thumb. The region spanning 5356–5468 (SVGACVVCSS…DDFNKIASCK (113 aa)) is the CV ZBD domain. Cys-5360, Cys-5363, Cys-5371, Cys-5374, Cys-5381, Cys-5384, His-5388, His-5394, Cys-5405, Cys-5410, Cys-5427, and His-5430 together coordinate Zn(2+). Residues 5611–5792 (SVPLLFQTNV…MCCLGPDIFL (182 aa)) enclose the (+)RNA virus helicase ATP-binding domain. 5636 to 5643 (GPPGTGKS) lines the ATP pocket. A (+)RNA virus helicase C-terminal domain is found at 5793-5962 (GNCYRCPKEI…TLSRLHCTTN (170 aa)). Residues 6029-6244 (FFITKDEAIK…RCLAIYDCFC (216 aa)) form the ExoN domain. Residues Asp-6047, Glu-6049, and Glu-6148 contribute to the active site. 7 residues coordinate Zn(2+): Cys-6164, Cys-6167, Cys-6183, His-6186, His-6214, Cys-6218, and His-6221. Active-site residues include His-6225 and Asp-6230. Cys-6236 lines the Zn(2+) pocket. In terms of domain architecture, N7-MTase spans 6253–6479 (YPIISNEVSI…NLWNTFTMLQ (227 aa)). 6288–6294 (DIGNPKG) is a binding site for S-adenosyl-L-methionine. The gpppA-binding stretch occupies residues 6366–6380 (CNGGSLYVNKHAFHT). 4 residues coordinate Zn(2+): Cys-6404, Cys-6425, Cys-6436, and His-6439. One can recognise a Nsp15 N-terminal oligomerization domain in the interval 6480–6540 (SLENVIYNLV…NIAVELFTKR (61 aa)). Positions 6541–6661 (SIRHHPELKI…FAMRKDGDDV (121 aa)) constitute an AV-Nsp11N/CoV-Nsp15M domain. One can recognise a NendoU domain in the interval 6711–6850 (EPRSDLERDF…NDNKIMTFYP (140 aa)). Active-site residues include His-6741, His-6756, Lys-6796, Lys-6899, Asp-6983, Lys-7023, and Glu-7056. The region spanning 6855–7149 (TSDWKPGYSM…KEIFVGDSLV (295 aa)) is the Nidovirus-type SAM-dependent 2'-O-MTase domain.

The protein belongs to the coronaviruses polyprotein 1ab family. Interacts with host PHB and PHB2. As to quaternary structure, interacts with papain-like protease nsp3 and non-structural protein 6. In terms of assembly, monomer. Homodimer. Only the homodimer shows catalytic activity. Interacts with nsp8 and nsp12 to form the replication-transcription complex (RTC): nsp12, nsp7, two subunits of nsp8, and up to two subunits of nsp13. As to quaternary structure, interacts with nsp7, nsp13 and nsp12 to form the replication-transcription complex (RTC): nsp12, nsp7, two subunits of nsp8, and up to two subunits of nsp13. In terms of assembly, interacts with nsp12. Interacts with proofreading exoribonuclease nsp14 and 2'-O-methyltransferase nsp16; these interactions enhance nsp14 and nsp16 enzymatic activities. As to quaternary structure, interacts with nsp7 and nsp8 to form the replication-transcription complex (RTC): nsp12, nsp7, two subunits of nsp8, and up to two subunits of nsp13. Interacts with nsp9. In terms of assembly, interacts with nsp8 to form the replication-transcription complex (RTC): nsp12, nsp7, two subunits of nsp8, and up to two subunits of nsp13. Mn(2+) is required as a cofactor. Requires Mg(2+) as cofactor. Specific enzymatic cleavages in vivo by its own proteases yield mature proteins. 3CL-PRO and PL-PRO proteinases are autocatalytically processed.

The protein localises to the host membrane. The protein resides in the host cytoplasm. It is found in the host perinuclear region. Its subcellular location is the host endoplasmic reticulum-Golgi intermediate compartment. The catalysed reaction is RNA(n) + a ribonucleoside 5'-triphosphate = RNA(n+1) + diphosphate. The enzyme catalyses ATP + H2O = ADP + phosphate + H(+). It carries out the reaction Thiol-dependent hydrolysis of ester, thioester, amide, peptide and isopeptide bonds formed by the C-terminal Gly of ubiquitin (a 76-residue protein attached to proteins as an intracellular targeting signal).. It catalyses the reaction a 5'-end (N(7)-methyl 5'-triphosphoguanosine)-ribonucleoside in mRNA + S-adenosyl-L-methionine = a 5'-end (N(7)-methyl 5'-triphosphoguanosine)-(2'-O-methyl-ribonucleoside) in mRNA + S-adenosyl-L-homocysteine + H(+). The catalysed reaction is uridylyl-uridylyl-ribonucleotide-RNA = a 3'-end uridylyl-2',3'-cyclophospho-uridine-RNA + a 5'-end dephospho-ribonucleoside-RNA. The enzyme catalyses a 5'-end diphospho-ribonucleoside in mRNA + GTP + H(+) = a 5'-end (5'-triphosphoguanosine)-ribonucleoside in mRNA + diphosphate. It carries out the reaction a 5'-end (5'-triphosphoguanosine)-ribonucleoside in mRNA + S-adenosyl-L-methionine = a 5'-end (N(7)-methyl 5'-triphosphoguanosine)-ribonucleoside in mRNA + S-adenosyl-L-homocysteine. Its function is as follows. The replicase polyprotein of coronaviruses is a multifunctional protein: it contains the activities necessary for the transcription of negative stranded RNA, leader RNA, subgenomic mRNAs and progeny virion RNA as well as proteinases responsible for the cleavage of the polyprotein into functional products. Functionally, inhibits host translation by interacting with the 40S ribosomal subunit. The nsp1-40S ribosome complex further induces an endonucleolytic cleavage near the 5'UTR of host mRNAs, targeting them for degradation. Viral mRNAs are not susceptible to nsp1-mediated endonucleolytic RNA cleavage thanks to the presence of a 5'-end leader sequence and are therefore protected from degradation. By suppressing host gene expression, nsp1 facilitates efficient viral gene expression in infected cells and evasion from host immune response. In terms of biological role, may play a role in the modulation of host cell survival signaling pathway by interacting with host PHB and PHB2. Indeed, these two proteins play a role in maintaining the functional integrity of the mitochondria and protecting cells from various stresses. Responsible for the cleavages located at the N-terminus of the replicase polyprotein. In addition, PL-PRO possesses a deubiquitinating/deISGylating activity and processes both 'Lys-48'- and 'Lys-63'-linked polyubiquitin chains from cellular substrates. Participates together with nsp4 in the assembly of virally-induced cytoplasmic double-membrane vesicles necessary for viral replication. Antagonizes innate immune induction of type I interferon by blocking the phosphorylation, dimerization and subsequent nuclear translocation of host IRF3. Also prevents host NF-kappa-B signaling. Its function is as follows. Participates in the assembly of virally-induced cytoplasmic double-membrane vesicles necessary for viral replication. Functionally, cleaves the C-terminus of replicase polyprotein at 11 sites. Recognizes substrates containing the core sequence [ILMVF]-Q-|-[SGACN]. Also able to bind an ADP-ribose-1''-phosphate (ADRP). In terms of biological role, plays a role in the initial induction of autophagosomes from host endoplasmic reticulum. Later, limits the expansion of these phagosomes that are no longer able to deliver viral components to lysosomes. Forms a hexadecamer with nsp8 (8 subunits of each) that may participate in viral replication by acting as a primase. Alternatively, may synthesize substantially longer products than oligonucleotide primers. Its function is as follows. Forms a hexadecamer with nsp7 (8 subunits of each) that may participate in viral replication by acting as a primase. Alternatively, may synthesize substantially longer products than oligonucleotide primers. Functionally, forms a primer, NSP9-pU, which is utilized by the polymerase for the initiation of RNA chains. Interacts with ribosome signal recognition particle RNA (SRP). Together with NSP8, suppress protein integration into the cell membrane, thereby disrupting host immune defenses. In terms of biological role, plays a pivotal role in viral transcription by stimulating both nsp14 3'-5' exoribonuclease and nsp16 2'-O-methyltransferase activities. Therefore plays an essential role in viral mRNAs cap methylation. RNA-directed RNA polymerase that catalyzes the transcription of viral genomic and subgenomic RNAs. Acts in complex with nsp7 and nsp8 to transcribe both the minus and positive strands of genomic RNA. The kinase-like NiRAN domain of NSP12 attaches one or more nucleotides to the amino terminus of NSP9, forming a covalent RNA-protein intermediate that serves as transcription/replication primer. Subgenomic RNAs (sgRNAs) are formed by discontinuous transcription: The polymerase has the ability to pause at transcription-regulating sequences (TRS) and jump to the leader TRS, resulting in a major deletion. This creates a series of subgenomic RNAs that are replicated, transcribed and translated. In addition, Nsp12 is a subunit of the viral RNA capping enzyme that catalyzes the RNA guanylyltransferase reaction for genomic and sub-genomic RNAs. Subsequently, the NiRAN domain transfers RNA to GDP, and forms the core cap structure GpppA-RNA. Its function is as follows. Multi-functional protein with a zinc-binding domain in N-terminus displaying RNA and DNA duplex-unwinding activities with 5' to 3' polarity. Activity of helicase is dependent on magnesium. Functionally, plays a role in viral RNA synthesis through two distinct activities. The N7-guanine methyltransferase activity plays a role in the formation of the cap structure GpppA-RNA. The proofreading exoribonuclease reduces the sensitivity of the virus to RNA mutagens during replication. This activity acts on both ssRNA and dsRNA in a 3'-5' direction. In terms of biological role, plays a role in viral transcription/replication and prevents the simultaneous activation of host cell dsRNA sensors, such as MDA5/IFIH1, OAS, and PKR. Acts by degrading the 5'-polyuridines generated during replication of the poly(A) region of viral genomic and subgenomic RNAs. Catalyzes a two-step reaction in which a 2'3'-cyclic phosphate (2'3'-cP) is first generated by 2'-O transesterification, which is then hydrolyzed to a 3'-phosphate (3'-P). If not degraded, poly(U) RNA would hybridize with poly(A) RNA tails and activate host dsRNA sensors. Methyltransferase that mediates mRNA cap 2'-O-ribose methylation to the 5'-cap structure of viral mRNAs. N7-methyl guanosine cap is a prerequisite for binding of nsp16. Therefore plays an essential role in viral mRNAs cap methylation which is essential to evade immune system. The sequence is that of Replicase polyprotein 1ab (rep) from Homo sapiens (Human).